The chain runs to 771 residues: Ribonucleoside-diphosphate reductase large subunit (771 aa).

An ATP-cone domain is found at 1–92; that stretch reads MFVIKRNGYK…VSNLHKETKK (92 aa). ATP contacts are provided by residues 5–6, 11–17, T53, D57, and K88; these read KR and ENVMFDK. GDP-binding residues include S202 and S217. Residues 226 to 228, K243, and R256 contribute to the dTTP site; that span reads DSI. Residue N427 coordinates GDP. N427 serves as the catalytic Proton acceptor. C429 serves as the catalytic Cysteine radical intermediate. GDP is bound by residues E431 and 603–606; that span reads TAST. E431 functions as the Proton acceptor in the catalytic mechanism.

This sequence belongs to the ribonucleoside diphosphate reductase large chain family. Interacts with RNR2/OPG047 subunit. Requires Mg(2+) as cofactor.

The enzyme catalyses a 2'-deoxyribonucleoside 5'-diphosphate + [thioredoxin]-disulfide + H2O = a ribonucleoside 5'-diphosphate + [thioredoxin]-dithiol. Its function is as follows. Ribonucleoside-diphosphate reductase holoenzyme provides the precursors necessary for viral DNA synthesis. Allows virus growth in non-dividing cells. Catalyzes the biosynthesis of deoxyribonucleotides from the corresponding ribonucleotides. The protein is Ribonucleoside-diphosphate reductase large subunit (OPG080) of Homo sapiens (Human).